Here is a 584-residue protein sequence, read N- to C-terminus: Putative sel1-like repeat-containing protein L18 (584 aa).

Sel1-like repeat units lie at residues 132–167 (SMAQYNLGQMYYRGISTKKNIQKAIKWITKSADQNN), 168–203 (KYGLINLARFYEYGDGVLLDIDKATQLLEQASCQNF), 204–237 (SKAQFYLGRIYMYKDPPDYKLAFKYYQQAANQNH), 238–273 (SSAQYFIAVFYKTGKCVAQDYKKAVHWLTLAASQGL), 274–309 (NSAKIKLAEMYMKGIDVEQNYHKAFELLNSSIYDDG), and 316–351 (EVAMTELACMYKRGLGIEKNISKAIYLHIKSRNTKN).

This chain is Putative sel1-like repeat-containing protein L18, found in Acanthamoeba polyphaga (Amoeba).